We begin with the raw amino-acid sequence, 219 residues long: Claudin-6 (219 aa).

The Cytoplasmic portion of the chain corresponds to 1–7 (MASTGLQ). The chain crosses the membrane as a helical span at residues 8–28 (ILGIVLTLLGWVNALVSCALP). Over 29–81 (MWKVTAFIGNSIVVAQMVWEGLWMSCVVQSTGQMQCKVYDSLLALPQDLQAAR) the chain is Extracellular. A helical membrane pass occupies residues 82–102 (ALCVVTLLIVLLGLLVYLAGA). Residues 103-116 (KCTTCVEDRNSKSR) lie on the Cytoplasmic side of the membrane. Residues 117 to 137 (LVLISGIIFVISGVLTLIPVC) form a helical membrane-spanning segment. At 138–163 (WTAHSIIQDFYNPLVADAQKRELGAS) the chain is on the extracellular side. A helical membrane pass occupies residues 164-184 (LYLGWAASGLLLLGGGLLCCA). The Cytoplasmic portion of the chain corresponds to 185-219 (CSSGGTQGPRHYMACYSTSVPHSRGPSEYPTKNYV). Residues Ser-201, Ser-203, Ser-207, and Ser-211 each carry the phosphoserine modification. The tract at residues 218–219 (YV) is interactions with TJP1, TJP2 and TJP3.

It belongs to the claudin family. As to quaternary structure, directly interacts with TJP1/ZO-1, TJP2/ZO-2 and TJP3/ZO-3. Interacts with CLDN1, CD81 and OCLN. As to expression, expressed mostly in embryonic tissues.

It localises to the cell junction. The protein resides in the tight junction. It is found in the cell membrane. Functionally, plays a major role in tight junction-specific obliteration of the intercellular space, through calcium-independent cell-adhesion activity. This is Claudin-6 (Cldn6) from Mus musculus (Mouse).